A 953-amino-acid polypeptide reads, in one-letter code: MEKTYNPTSIEQDLYKTWEEQGYFKPHGDTSKDAYSIMIPPPNVTGSLHMGHAFQDTIMDTLIRCQRMKGKNTLWQVGTDHAGIATQMVVERKIAAEEGKTKHDYGRDAFIDKIWEWKAESGGTITKQLRRLGASVDWDRERFTMDDGFYKAVQEVFVRLYKDDLIYRGKRLVNWDPKLHTAISDLEVENKETKGHMWHFRYPLADGVKTADGKDYIVVATTRPETMLGDTGVAVNPEDPRYKDLIGKEIILPIVGRRIPIVGDEHADMEKGTGCVKITPAHDFNDYEVGKRHQLPMINILTFDANIRDAAEVFNSNGEASNAYGTEIPAKYQGMERFAARKAIVAEFEELGLLQEIKDHDLTVPYGDRGGVVIEPMLTDQWYVRAGILAKPAVEAVENGDIQFVPKQYENMYFSWMRDIQDWCISRQLWWGHRIPAWYDEQGNVFVGRNEEEVRAENNIAADVALRQDDDVLDTWFSSALWTFGTLGWPEKTPELKVFHPTDVLVTGFDIIFFWVARMIMMTMHFCKDEDGKAQVPFKTVYVTGLIRDENGDKMSKSKGNVLDPIDMIDGIDLESLVAKRTGNMMQPQLAAKIEKNTRKTFENGIEAYGTDSLRFTLAAMASTGRDINWDMKRLEGYRNFCNKLWNASRYVLMNTEEQDCGFAAGAELEYSLADKWIESQFELAAKEFNGHIDNFRLDMAANTLYEFIWNQFCDWYLELTKPVLWKGTEAQQRATRRTLITVLEKTLRLAHPVIPYITETIWQSVKPLVDGVEGDTIMLQALPQYDVANFNQEALDDIEWVKAFITSIRNLRAEYDINPGKPLEVMLKAANEQDAARIEANKPVLVSLAKLESIRVLADGEATPACATALVGKSELMIPMAGLIDKDAELDRLAKEIAKTQGEIARIEGKLGNEGFVAKAPEAVITKEREKLAGYQEALVKLEQQKATIAAL.

Positions 42–52 match the 'HIGH' region motif; the sequence is PNVTGSLHMGH. Positions 554 to 558 match the 'KMSKS' region motif; that stretch reads KMSKS. Lysine 557 is a binding site for ATP. Positions 884–952 form a coiled coil; sequence LIDKDAELDR…LEQQKATIAA (69 aa).

Belongs to the class-I aminoacyl-tRNA synthetase family. ValS type 1 subfamily. Monomer.

Its subcellular location is the cytoplasm. It carries out the reaction tRNA(Val) + L-valine + ATP = L-valyl-tRNA(Val) + AMP + diphosphate. Catalyzes the attachment of valine to tRNA(Val). As ValRS can inadvertently accommodate and process structurally similar amino acids such as threonine, to avoid such errors, it has a 'posttransfer' editing activity that hydrolyzes mischarged Thr-tRNA(Val) in a tRNA-dependent manner. The protein is Valine--tRNA ligase of Vibrio cholerae serotype O1 (strain ATCC 39315 / El Tor Inaba N16961).